We begin with the raw amino-acid sequence, 256 residues long: Protein FixA (256 aa).

This sequence belongs to the ETF beta-subunit/FixA family. As to quaternary structure, heterodimer of FixA and FixB.

It participates in amine and polyamine metabolism; carnitine metabolism. Its function is as follows. Required for anaerobic carnitine reduction. May bring reductant to CaiA. In Shigella flexneri serotype 5b (strain 8401), this protein is Protein FixA.